A 244-amino-acid chain; its full sequence is Tetraspanin-2A (244 aa).

Residues 1-22 (MGIGYGASDEQLEKQIGCVKYT) lie on the Cytoplasmic side of the membrane. The helical transmembrane segment at 23–43 (LFCFNIVAWMISTALFALTVW) threads the bilayer. Topologically, residues 44 to 61 (LRAEPGFNDWLRILEAQS) are extracellular. A helical transmembrane segment spans residues 62-82 (FYIGVYVLIGISIVMMAVSFL). The Cytoplasmic portion of the chain corresponds to 83 to 91 (GCLSALMEN). A helical membrane pass occupies residues 92 to 112 (TLALFVFVGTQVFGFIAIVAG). At 113 to 206 (SAVLLQFSTI…TWFFEGKTGW (94 aa)) the chain is on the extracellular side. The helical transmembrane segment at 207-227 (IVALAMTLGLLNVICAVMSFV) threads the bilayer. Residues 228 to 244 (LVQAVKKEEEQASNYRR) are Cytoplasmic-facing.

The protein belongs to the tetraspanin (TM4SF) family. In terms of assembly, forms a complex with Ssk and mesh.

It localises to the apicolateral cell membrane. The protein localises to the cell junction. The protein resides in the septate junction. Its function is as follows. Required for assembly of smooth septate junctions (sSJs), together with Ssk and mesh. Important for barrier function of the midgut epithelium. This is Tetraspanin-2A from Drosophila melanogaster (Fruit fly).